Consider the following 658-residue polypeptide: ATP-dependent DNA helicase Rep (658 aa).

The UvrD-like helicase ATP-binding domain occupies 1–280 (MSLNFNQKNA…IKMEQNYRSY (280 aa)). ATP contacts are provided by residues 22 to 29 (AGAGSGKT) and R278. In terms of domain architecture, UvrD-like helicase C-terminal spans 281–564 (GRILKAANKL…QLMTLHSSKG (284 aa)).

The protein belongs to the helicase family. UvrD subfamily. Homodimer.

The enzyme catalyses Couples ATP hydrolysis with the unwinding of duplex DNA by translocating in the 3'-5' direction.. The catalysed reaction is ATP + H2O = ADP + phosphate + H(+). Functionally, rep helicase is a single-stranded DNA-dependent ATPase involved in DNA replication; it can initiate unwinding at a nick in the DNA. It binds to the single-stranded DNA and acts in a progressive fashion along the DNA in the 3' to 5' direction. The chain is ATP-dependent DNA helicase Rep from Buchnera aphidicola subsp. Schizaphis graminum (strain Sg).